A 100-amino-acid polypeptide reads, in one-letter code: Co-chaperonin GroES (100 aa).

It belongs to the GroES chaperonin family. As to quaternary structure, heptamer of 7 subunits arranged in a ring. Interacts with the chaperonin GroEL.

Its subcellular location is the cytoplasm. Functionally, together with the chaperonin GroEL, plays an essential role in assisting protein folding. The GroEL-GroES system forms a nano-cage that allows encapsulation of the non-native substrate proteins and provides a physical environment optimized to promote and accelerate protein folding. GroES binds to the apical surface of the GroEL ring, thereby capping the opening of the GroEL channel. This chain is Co-chaperonin GroES, found in Mycobacterium tuberculosis (strain CDC 1551 / Oshkosh).